Consider the following 122-residue polypeptide: Small ribosomal subunit protein uS13 (122 aa).

The tract at residues 99 to 122 (RGQRTHTNARTRKGPAKAIAGKKK) is disordered.

Belongs to the universal ribosomal protein uS13 family. Part of the 30S ribosomal subunit. Forms a loose heterodimer with protein S19. Forms two bridges to the 50S subunit in the 70S ribosome.

Its function is as follows. Located at the top of the head of the 30S subunit, it contacts several helices of the 16S rRNA. In the 70S ribosome it contacts the 23S rRNA (bridge B1a) and protein L5 of the 50S subunit (bridge B1b), connecting the 2 subunits; these bridges are implicated in subunit movement. Contacts the tRNAs in the A and P-sites. This is Small ribosomal subunit protein uS13 from Rhizobium etli (strain CIAT 652).